We begin with the raw amino-acid sequence, 329 residues long: Ketol-acid reductoisomerase (NADP(+)) (329 aa).

A KARI N-terminal Rossmann domain is found at 1-181 (MKVYYEQDAN…GGTRSGVIET (181 aa)). NADP(+) contacts are provided by residues 24–27 (YGSQ), Arg-47, and 82–85 (DQYQ). The active site involves His-107. An NADP(+)-binding site is contributed by Gly-133. The region spanning 182–327 (TFREETETDL…ARLRSMMPWL (146 aa)) is the KARI C-terminal knotted domain. Residues Asp-190, Glu-194, Glu-226, and Glu-230 each contribute to the Mg(2+) site. Position 251 (Ser-251) interacts with substrate.

The protein belongs to the ketol-acid reductoisomerase family. The cofactor is Mg(2+).

It catalyses the reaction (2R)-2,3-dihydroxy-3-methylbutanoate + NADP(+) = (2S)-2-acetolactate + NADPH + H(+). The enzyme catalyses (2R,3R)-2,3-dihydroxy-3-methylpentanoate + NADP(+) = (S)-2-ethyl-2-hydroxy-3-oxobutanoate + NADPH + H(+). It participates in amino-acid biosynthesis; L-isoleucine biosynthesis; L-isoleucine from 2-oxobutanoate: step 2/4. Its pathway is amino-acid biosynthesis; L-valine biosynthesis; L-valine from pyruvate: step 2/4. Its function is as follows. Involved in the biosynthesis of branched-chain amino acids (BCAA). Catalyzes an alkyl-migration followed by a ketol-acid reduction of (S)-2-acetolactate (S2AL) to yield (R)-2,3-dihydroxy-isovalerate. In the isomerase reaction, S2AL is rearranged via a Mg-dependent methyl migration to produce 3-hydroxy-3-methyl-2-ketobutyrate (HMKB). In the reductase reaction, this 2-ketoacid undergoes a metal-dependent reduction by NADPH to yield (R)-2,3-dihydroxy-isovalerate. The polypeptide is Ketol-acid reductoisomerase (NADP(+)) (Oleidesulfovibrio alaskensis (strain ATCC BAA-1058 / DSM 17464 / G20) (Desulfovibrio alaskensis)).